The sequence spans 295 residues: 4-diphosphocytidyl-2-C-methyl-D-erythritol kinase (295 aa).

K25 is a catalytic residue. 108-118 provides a ligand contact to ATP; it reads PMGSGLGGGSS. The active site involves D150.

It belongs to the GHMP kinase family. IspE subfamily.

The enzyme catalyses 4-CDP-2-C-methyl-D-erythritol + ATP = 4-CDP-2-C-methyl-D-erythritol 2-phosphate + ADP + H(+). The protein operates within isoprenoid biosynthesis; isopentenyl diphosphate biosynthesis via DXP pathway; isopentenyl diphosphate from 1-deoxy-D-xylulose 5-phosphate: step 3/6. In terms of biological role, catalyzes the phosphorylation of the position 2 hydroxy group of 4-diphosphocytidyl-2C-methyl-D-erythritol. The chain is 4-diphosphocytidyl-2-C-methyl-D-erythritol kinase from Pasteurella multocida (strain Pm70).